The chain runs to 456 residues: uncharacterized protein (456 aa).

A run of 11 helical transmembrane segments spans residues 12–32 (SFIW…YLTL), 63–83 (FAAL…VGVA), 86–106 (VQAG…LGMA), 143–163 (WLAK…IGTF), 179–199 (IPVL…ILGG), 208–228 (SVIV…IILL), 237–257 (ILLI…AVGL), 305–325 (FLDT…TGAW), 348–368 (IGAT…ILGW), 390–410 (LAYI…IWII), and 414–434 (VNGL…KVII).

This sequence belongs to the alanine or glycine:cation symporter (AGCS) (TC 2.A.25) family.

The protein resides in the cell inner membrane. This is an uncharacterized protein from Haemophilus influenzae (strain ATCC 51907 / DSM 11121 / KW20 / Rd).